The primary structure comprises 465 residues: UDP-N-acetylmuramoylalanine--D-glutamate ligase (465 aa).

Residue 112 to 118 participates in ATP binding; that stretch reads GTDGKTT.

It belongs to the MurCDEF family.

It localises to the cytoplasm. It catalyses the reaction UDP-N-acetyl-alpha-D-muramoyl-L-alanine + D-glutamate + ATP = UDP-N-acetyl-alpha-D-muramoyl-L-alanyl-D-glutamate + ADP + phosphate + H(+). The protein operates within cell wall biogenesis; peptidoglycan biosynthesis. Its function is as follows. Cell wall formation. Catalyzes the addition of glutamate to the nucleotide precursor UDP-N-acetylmuramoyl-L-alanine (UMA). This is UDP-N-acetylmuramoylalanine--D-glutamate ligase from Chlorobium limicola (strain DSM 245 / NBRC 103803 / 6330).